Reading from the N-terminus, the 101-residue chain is MAKTSAVEKNKRRRKLVANHSAKRAALKATIMNQSLPIEERFKATLKLAELPRDGSKTRIRNRCEVTGRPRAYYRKLRMSRIALRELGNLGKVPGVVKSSW.

The segment at 1–20 (MAKTSAVEKNKRRRKLVANH) is disordered. Over residues 10–20 (NKRRRKLVANH) the composition is skewed to basic residues.

It belongs to the universal ribosomal protein uS14 family. As to quaternary structure, part of the 30S ribosomal subunit. Contacts proteins S3 and S10.

Binds 16S rRNA, required for the assembly of 30S particles and may also be responsible for determining the conformation of the 16S rRNA at the A site. The protein is Small ribosomal subunit protein uS14 of Sinorhizobium medicae (strain WSM419) (Ensifer medicae).